The primary structure comprises 277 residues: Thymidylate synthase (277 aa).

Residue R21 participates in dUMP binding. H51 contributes to the (6R)-5,10-methylene-5,6,7,8-tetrahydrofolate binding site. A dUMP-binding site is contributed by 126 to 127 (RR). C159 serves as the catalytic Nucleophile. DUMP-binding positions include 179 to 182 (RSSD), N190, and 220 to 222 (HAY). D182 lines the (6R)-5,10-methylene-5,6,7,8-tetrahydrofolate pocket. A276 is a (6R)-5,10-methylene-5,6,7,8-tetrahydrofolate binding site.

Belongs to the thymidylate synthase family. Bacterial-type ThyA subfamily. In terms of assembly, homodimer.

It is found in the cytoplasm. The catalysed reaction is dUMP + (6R)-5,10-methylene-5,6,7,8-tetrahydrofolate = 7,8-dihydrofolate + dTMP. It functions in the pathway pyrimidine metabolism; dTTP biosynthesis. Its function is as follows. Catalyzes the reductive methylation of 2'-deoxyuridine-5'-monophosphate (dUMP) to 2'-deoxythymidine-5'-monophosphate (dTMP) while utilizing 5,10-methylenetetrahydrofolate (mTHF) as the methyl donor and reductant in the reaction, yielding dihydrofolate (DHF) as a by-product. This enzymatic reaction provides an intracellular de novo source of dTMP, an essential precursor for DNA biosynthesis. The sequence is that of Thymidylate synthase from Pseudomonas fluorescens (strain SBW25).